The primary structure comprises 86 residues: Large ribosomal subunit protein eL43 (86 aa).

The C4-type zinc finger occupies 38 to 59 (CPVCGRKAVRRISTGIWQCQKC).

This sequence belongs to the eukaryotic ribosomal protein eL43 family. Requires Zn(2+) as cofactor.

In Thermococcus gammatolerans (strain DSM 15229 / JCM 11827 / EJ3), this protein is Large ribosomal subunit protein eL43.